Consider the following 321-residue polypeptide: Corticotropin-releasing factor-binding protein (321 aa).

A signal peptide spans Met1–Gly21. 5 disulfide bridges follow: Cys59-Cys80, Cys103-Cys140, Cys182-Cys204, Cys237-Cys264, and Cys277-Cys317. Residue Asn203 is glycosylated (N-linked (GlcNAc...) asparagine).

Belongs to the CRF-binding protein family.

The protein localises to the secreted. Functionally, binds CRF and inactivates it. May prevent inappropriate pituitary-adrenal stimulation in pregnancy. The sequence is that of Corticotropin-releasing factor-binding protein (crhbp) from Xenopus laevis (African clawed frog).